Reading from the N-terminus, the 89-residue chain is Probable Fe(2+)-trafficking protein (89 aa).

The protein belongs to the Fe(2+)-trafficking protein family.

Could be a mediator in iron transactions between iron acquisition and iron-requiring processes, such as synthesis and/or repair of Fe-S clusters in biosynthetic enzymes. In Hahella chejuensis (strain KCTC 2396), this protein is Probable Fe(2+)-trafficking protein.